A 424-amino-acid chain; its full sequence is Histidine--tRNA ligase (424 aa).

This sequence belongs to the class-II aminoacyl-tRNA synthetase family. Homodimer.

The protein resides in the cytoplasm. It carries out the reaction tRNA(His) + L-histidine + ATP = L-histidyl-tRNA(His) + AMP + diphosphate + H(+). In Salmonella arizonae (strain ATCC BAA-731 / CDC346-86 / RSK2980), this protein is Histidine--tRNA ligase.